Consider the following 413-residue polypeptide: O-methyltransferase kntB (413 aa).

Residues 255 to 256 (GG), Asp-280, 302 to 303 (NF), and Arg-319 each bind S-adenosyl-L-methionine. His-322 acts as the Proton acceptor in catalysis.

This sequence belongs to the class I-like SAM-binding methyltransferase superfamily. Cation-independent O-methyltransferase family. Requires S-adenosyl-L-methionine as cofactor.

It participates in secondary metabolite biosynthesis. Its function is as follows. Non-reducing polyketide synthase; part of the gene cluster that mediates the biosynthesis of the bicoumarin kotanin. The non-reducing polyketide synthase ktnS first catalyzes the formation of the pentaketidic 4,7-dihydroxy-5-methylcoumarin from acetyl coenzyme A and 4 malonyl coenzyme A molecules. Further O-methylation by ktnB leads to the formation of 7-demethylsiderin. Then, an oxidative phenol coupling catalyzed by the cytochrome P450 monooxygenase ktnC forms the 8,8'-dimer P-orlandin via dimerization the monomeric precursor, 7-demethylsiderin. P-orlandin is subsequently O-methylated in a stepwise fashion to demethylkotanin and kotanin. This is O-methyltransferase kntB from Aspergillus niger (strain ATCC MYA-4892 / CBS 513.88 / FGSC A1513).